The primary structure comprises 432 residues: Enolase (432 aa).

Gln-167 contacts (2R)-2-phosphoglycerate. Glu-209 acts as the Proton donor in catalysis. Residues Asp-246, Glu-291, and Asp-318 each contribute to the Mg(2+) site. (2R)-2-phosphoglycerate contacts are provided by Lys-343, Arg-372, Ser-373, and Lys-394. The Proton acceptor role is filled by Lys-343.

It belongs to the enolase family. As to quaternary structure, component of the RNA degradosome, a multiprotein complex involved in RNA processing and mRNA degradation. The cofactor is Mg(2+).

The protein resides in the cytoplasm. It localises to the secreted. It is found in the cell surface. It carries out the reaction (2R)-2-phosphoglycerate = phosphoenolpyruvate + H2O. It functions in the pathway carbohydrate degradation; glycolysis; pyruvate from D-glyceraldehyde 3-phosphate: step 4/5. Catalyzes the reversible conversion of 2-phosphoglycerate (2-PG) into phosphoenolpyruvate (PEP). It is essential for the degradation of carbohydrates via glycolysis. In Aliivibrio salmonicida (strain LFI1238) (Vibrio salmonicida (strain LFI1238)), this protein is Enolase.